Here is a 652-residue protein sequence, read N- to C-terminus: Acetyl-coenzyme A synthetase (652 aa).

CoA is bound by residues 193-196 (RRGK) and threonine 312. Residues 388-390 (GEP), 412-417 (DTWWQT), aspartate 501, and arginine 516 contribute to the ATP site. Serine 524 lines the CoA pocket. Residues valine 538, histidine 540, and valine 543 each coordinate Mg(2+). Lysine 611 carries the N6-acetyllysine modification.

Belongs to the ATP-dependent AMP-binding enzyme family. It depends on Mg(2+) as a cofactor. Acetylated. Deacetylation by the SIR2-homolog deacetylase activates the enzyme.

It carries out the reaction acetate + ATP + CoA = acetyl-CoA + AMP + diphosphate. Its function is as follows. Catalyzes the conversion of acetate into acetyl-CoA (AcCoA), an essential intermediate at the junction of anabolic and catabolic pathways. AcsA undergoes a two-step reaction. In the first half reaction, AcsA combines acetate with ATP to form acetyl-adenylate (AcAMP) intermediate. In the second half reaction, it can then transfer the acetyl group from AcAMP to the sulfhydryl group of CoA, forming the product AcCoA. In Streptomyces avermitilis (strain ATCC 31267 / DSM 46492 / JCM 5070 / NBRC 14893 / NCIMB 12804 / NRRL 8165 / MA-4680), this protein is Acetyl-coenzyme A synthetase.